Reading from the N-terminus, the 459-residue chain is Phosphoglucosamine mutase (459 aa).

The active-site Phosphoserine intermediate is the serine 100. Residues serine 100, aspartate 256, aspartate 258, and aspartate 260 each contribute to the Mg(2+) site. Position 100 is a phosphoserine (serine 100).

The protein belongs to the phosphohexose mutase family. Requires Mg(2+) as cofactor. Activated by phosphorylation.

It catalyses the reaction alpha-D-glucosamine 1-phosphate = D-glucosamine 6-phosphate. In terms of biological role, catalyzes the conversion of glucosamine-6-phosphate to glucosamine-1-phosphate. The chain is Phosphoglucosamine mutase from Heliobacterium modesticaldum (strain ATCC 51547 / Ice1).